The following is a 480-amino-acid chain: Alpha-glucosidase (480 aa).

An NAD(+)-binding site is contributed by 4–70 (VKIGIIGAGS…ADLKFEKTMN (67 aa)). Aspartate 119 and asparagine 153 together coordinate substrate. Mn(2+) is bound at residue cysteine 174. Histidine 175 functions as the Proton donor in the catalytic mechanism. Position 203 (histidine 203) interacts with Mn(2+). Aspartate 260 acts as the Proton acceptor in catalysis.

The protein belongs to the glycosyl hydrolase 4 family. Homodimer. NAD(+) is required as a cofactor. Requires Mn(2+) as cofactor. Co(2+) serves as cofactor. It depends on Ni(2+) as a cofactor.

It carries out the reaction Hydrolysis of terminal, non-reducing (1-&gt;4)-linked alpha-D-glucose residues with release of alpha-D-glucose.. Its activity is regulated as follows. Inhibited by Hg(2+) ion and EDTA. In terms of biological role, alpha-glycosidase with a very broad specificity. Hydrolyzes maltose and other small maltooligosaccharides but is inactive against the polymeric substrate starch. AglA is not specific with respect to the configuration at the C-4 position of its substrates because glycosidic derivatives of D-galactose are also hydrolyzed. Does not cleave beta-glycosidic bonds. The protein is Alpha-glucosidase (aglA) of Thermotoga maritima (strain ATCC 43589 / DSM 3109 / JCM 10099 / NBRC 100826 / MSB8).